Consider the following 282-residue polypeptide: Shikimate dehydrogenase (NADP(+)) (282 aa).

Shikimate-binding positions include 18-20 (SRS) and T65. K69 (proton acceptor) is an active-site residue. E81 is a binding site for NADP(+). Residues N90 and D105 each contribute to the shikimate site. Residues 130–134 (GAGGA), 154–159 (NRTPAR), and M222 each bind NADP(+). Y224 is a binding site for shikimate. Residue G245 participates in NADP(+) binding.

Belongs to the shikimate dehydrogenase family. As to quaternary structure, homodimer.

The catalysed reaction is shikimate + NADP(+) = 3-dehydroshikimate + NADPH + H(+). It functions in the pathway metabolic intermediate biosynthesis; chorismate biosynthesis; chorismate from D-erythrose 4-phosphate and phosphoenolpyruvate: step 4/7. In terms of biological role, involved in the biosynthesis of the chorismate, which leads to the biosynthesis of aromatic amino acids. Catalyzes the reversible NADPH linked reduction of 3-dehydroshikimate (DHSA) to yield shikimate (SA). This is Shikimate dehydrogenase (NADP(+)) from Acidovorax sp. (strain JS42).